A 617-amino-acid chain; its full sequence is Ceramide transfer protein (617 aa).

The segment covering 1 to 11 has biased composition (polar residues); sequence MSDNQSWNSSG. Residues 1 to 23 form a disordered region; sequence MSDNQSWNSSGSEEDLETESGPP. In terms of domain architecture, PH spans 23–117; the sequence is PVERCGVLSK…WIDSIEQHKS (95 aa). Positions 268–302 form a coiled coil; that stretch reads REDSWQKRLDKEIEKRRRVEEAYKNAMTELKKKSH. The FFAT signature appears at 320–326; sequence EFFDAVE. The span at 332 to 344 shows a compositional bias: basic and acidic residues; it reads QDKIEQSQSEKGR. The disordered stretch occupies residues 332 to 355; it reads QDKIEQSQSEKGRSHWPSSLPSTE. Residues 383 to 611 form the START domain; that stretch reads DEHRFRIQVE…FTSYVQEKTA (229 aa). Residues glutamate 466, glutamine 487, asparagine 524, and tyrosine 572 each coordinate an N-acylsphing-4-enine.

The protein localises to the cytoplasm. The protein resides in the golgi apparatus. Its subcellular location is the endoplasmic reticulum. It catalyses the reaction N-hexadecanoylsphing-4-enine(in) = N-hexadecanoylsphing-4-enine(out). Functionally, may mediate the intracellular trafficking of ceramide in a non-vesicular manner. This is Ceramide transfer protein (cert1) from Xenopus tropicalis (Western clawed frog).